The chain runs to 451 residues: MGRLFGTDGVRGRANADLTPELALAVAVAAAHTLAEADRSHPPLAVVGRDTRASGEMLEAAVVAGLTSAGANVVRVGVLPTPAVAFLTAEAKADFGVMLSASHNPMPDNGIKLFAAGGHKLPDEIEMKIEAAIEANATTAWERPVGAGVGRVHDLLDGADHYVQHLVGTVPHRLDGIKVVVDCANGAAAEVAPAAYREAGAEVVEIHAKPDGLNINDECGSNHLAALQQAVVEHGAQLGIAHDGDADRCVAVSADGDEVDGDQVMAILALAMRQAGTLTADTLVATVMSNLGLRIAMSREGIRLVETKVGDRYVLEELRASGLALGGEQSGHIVMPAHATTGDGVLTGLHLMSRLAATGKSLAELAAVVTPLPQVLINVPVGDRTVGAVAPAVRAEVERAEVELGDAGRVLLRPSGTEPLVRVMVEASTETLARQVAERIADQVRTASPVG.

The active-site Phosphoserine intermediate is serine 102. Mg(2+)-binding residues include serine 102, aspartate 243, aspartate 245, and aspartate 247. The residue at position 102 (serine 102) is a Phosphoserine.

The protein belongs to the phosphohexose mutase family. Mg(2+) serves as cofactor. Activated by phosphorylation.

It catalyses the reaction alpha-D-glucosamine 1-phosphate = D-glucosamine 6-phosphate. Its function is as follows. Catalyzes the conversion of glucosamine-6-phosphate to glucosamine-1-phosphate. This chain is Phosphoglucosamine mutase, found in Salinispora arenicola (strain CNS-205).